The sequence spans 719 residues: Polyribonucleotide nucleotidyltransferase (719 aa).

The Mg(2+) site is built by D487 and D493. A KH domain is found at 554-613 (PRIETFKIATDKIREVIGTGGKVIREIVEKTGAKVNIEDDGTVKVASSDGEAMKAAIKWI). The S1 motif domain maps to 623-691 (GQIYDGTVVK…DRGKTRLSMK (69 aa)). Positions 691 to 719 (KVVDQTTGEDLEAKQKDAPAEAPREAAGE) are disordered. Over residues 701 to 719 (LEAKQKDAPAEAPREAAGE) the composition is skewed to basic and acidic residues.

This sequence belongs to the polyribonucleotide nucleotidyltransferase family. Mg(2+) serves as cofactor.

Its subcellular location is the cytoplasm. It catalyses the reaction RNA(n+1) + phosphate = RNA(n) + a ribonucleoside 5'-diphosphate. In terms of biological role, involved in mRNA degradation. Catalyzes the phosphorolysis of single-stranded polyribonucleotides processively in the 3'- to 5'-direction. The sequence is that of Polyribonucleotide nucleotidyltransferase from Bradyrhizobium sp. (strain ORS 278).